Here is a 90-residue protein sequence, read N- to C-terminus: Small ribosomal subunit protein bS20 (90 aa).

The interval 1–27 (MANSAQAKKRARQNEKRELHNASQRSA) is disordered.

The protein belongs to the bacterial ribosomal protein bS20 family.

Functionally, binds directly to 16S ribosomal RNA. This chain is Small ribosomal subunit protein bS20, found in Coxiella burnetii (strain CbuK_Q154) (Coxiella burnetii (strain Q154)).